The primary structure comprises 739 residues: Probable beta-glucosidase L (739 aa).

The first 17 residues, 1–17 (MQTLFLSLLAAAVTVHA), serve as a signal peptide directing secretion. Asn-40 and Asn-224 each carry an N-linked (GlcNAc...) asparagine glycan. Residue Asp-252 is part of the active site. An N-linked (GlcNAc...) asparagine glycan is attached at Asn-398.

The protein belongs to the glycosyl hydrolase 3 family.

It is found in the secreted. The catalysed reaction is Hydrolysis of terminal, non-reducing beta-D-glucosyl residues with release of beta-D-glucose.. The protein operates within glycan metabolism; cellulose degradation. Its function is as follows. Beta-glucosidases are one of a number of cellulolytic enzymes involved in the degradation of cellulosic biomass. Catalyzes the last step releasing glucose from the inhibitory cellobiose. This is Probable beta-glucosidase L (bglL) from Aspergillus fumigatus (strain CBS 144.89 / FGSC A1163 / CEA10) (Neosartorya fumigata).